Here is a 275-residue protein sequence, read N- to C-terminus: Lacto-N-neotetraose biosynthesis glycosyltransferase LgtB (275 aa).

This sequence belongs to the glycosyltransferase 25 family.

It functions in the pathway glycan metabolism; lacto-N-neotetraose biosynthesis. Its pathway is bacterial outer membrane biogenesis; lipooligosaccharide biosynthesis. Its function is as follows. Adds the second galactose to the lacto-N-tetraose chain in lipooligosaccharide (LOS). The protein is Lacto-N-neotetraose biosynthesis glycosyltransferase LgtB (lgtB) of Neisseria meningitidis serogroup B (strain ATCC BAA-335 / MC58).